The following is a 310-amino-acid chain: Junctional adhesion molecule C (310 aa).

Positions 1–31 are cleaved as a signal peptide; that stretch reads MALSRRLRLRLCARLPDFFLLLLFRGCVIEA. The Extracellular segment spans residues 32-241; that stretch reads VNLKSSNRNP…GQDMEVYDLN (210 aa). An Ig-like V-type domain is found at 35-127; sequence KSSNRNPVVH…VALNDRKEVD (93 aa). 2 disulfide bridges follow: Cys-53-Cys-115 and Cys-160-Cys-219. Residues Asn-104 and Asn-192 are each glycosylated (N-linked (GlcNAc...) asparagine). The 98-residue stretch at 139–236 folds into the Ig-like C2-type domain; sequence PVAPVCRVPK…AARCEGQDME (98 aa). The chain crosses the membrane as a helical span at residues 242-262; that stretch reads IAGIIGGVLVVLIVLAVITMG. The Cytoplasmic portion of the chain corresponds to 263 to 310; it reads ICCAYRRGCFISSKQDGESYKSPGKHEGVNYIRTSEEGDFRHKSSFVI. Residues Cys-264 and Cys-265 are each lipidated (S-palmitoyl cysteine).

Belongs to the immunoglobulin superfamily. In terms of assembly, interacts with ITGAM. Interacts with GORASP2. In terms of processing, proteolytically cleaved from endothelial cells surface into a soluble form by ADAM10 and ADAM17; the release of soluble JAM3 is increased by pro-inflammatory factors. S-palmitoylated by ZDHHC7. S-palmitoylation promotes expression at tight junctions.

It is found in the cell membrane. Its subcellular location is the cell junction. The protein resides in the desmosome. The protein localises to the tight junction. It localises to the secreted. Functionally, junctional adhesion protein that mediates heterotypic cell-cell interactions with its cognate receptor JAM2 to regulate different cellular processes. Plays a role in homing and mobilization of hematopoietic stem and progenitor cells within the bone marrow. At the surface of bone marrow stromal cells, it contributes to the retention of the hematopoietic stem and progenitor cells expressing JAM3. Plays a central role in leukocytes extravasation by facilitating transmigration through the endothelium. Plays a role in spermatogenesis where JAM2 and JAM3, which are respectively expressed by Sertoli and germ cells, mediate an interaction between both cell types and play an essential role in the anchorage of germ cells onto Sertoli cells and the assembly of cell polarity complexes during spermatid differentiation. Also functions as a counter-receptor for ITGAM, mediating leukocyte-platelet interactions and is involved in the regulation of transepithelial migration of polymorphonuclear neutrophils (PMN). Plays a role in angiogenesis. Plays a role in the regulation of cell migration. During myogenesis, it is involved in myocyte fusion. In terms of biological role, promotes chemotaxis of vascular endothelial cells and stimulates angiogenesis. This Rattus norvegicus (Rat) protein is Junctional adhesion molecule C (Jam3).